Reading from the N-terminus, the 648-residue chain is RalA-binding protein 1 (648 aa).

Residues 1 to 158 are disordered; that stretch reads MTECFLPPSS…KKSKDLTAAD (158 aa). Thr-2 bears the N-acetylthreonine mark. Residues 24 to 33 are compositionally biased toward polar residues; the sequence is LTRTPSSEEI. Residues Ser-29, Ser-30, and Ser-34 each carry the phosphoserine modification. Thr-44 is subject to Phosphothreonine. A phosphoserine mark is found at Ser-48 and Ser-62. Basic and acidic residues predominate over residues 52-68; it reads DVLHEPPDTVSDDDKDH. 69-74 is a binding site for ATP; it reads GKKKGK. Residues 69 to 79 are compositionally biased toward basic residues; that stretch reads GKKKGKFKKKE. Phosphoserine occurs at positions 92 and 93. The span at 102 to 118 shows a compositional bias: basic residues; that stretch reads KVKRSKGIHVFKKPSFS. Residues 102–119 form a nuclear localization signal region; sequence KVKRSKGIHVFKKPSFSK. The span at 119 to 155 shows a compositional bias: basic and acidic residues; that stretch reads KKKEKDFKIKEKPKEEKHKEEKHKEEKHKEKKSKDLT. A mediates association with membranes and could form transmembrane domains region spans residues 154–219; the sequence is LTAADVVKQW…PAVFRECVDY (66 aa). Residues 192–380 enclose the Rho-GAP domain; the sequence is VPLVDAVERT…VVLKQVTRPL (189 aa). Residues 403–499 are mediates interaction with RALA and RALB; that stretch reads RRQEFLLNCL…LTEQEELLAM (97 aa). 418–425 is an ATP binding site; that stretch reads GGIKDLSK. 2 positions are modified to phosphoserine: Ser-461 and Ser-463. Residues 500–648 form a mediates interaction with REPS1 and REPS2 region; the sequence is EQFLRRQIAS…PSKDRKETPI (149 aa). Disordered regions lie at residues 525 to 552 and 598 to 648; these read QSRQ…EEEL and RAKS…ETPI. The span at 536-552 shows a compositional bias: acidic residues; the sequence is EEYSSDSESESEDEEEL. Residues 629-648 are compositionally biased toward basic and acidic residues; the sequence is RVAKEQAKASPSKDRKETPI. Ser-638 is modified (phosphoserine).

As to quaternary structure, interacts with the GTP-bound form of RALA (via effector domain); during mitosis, recruits RALBP1 to the mitochondrion where it promotes DNM1L phosphorylation and mitochondrial fission. Interacts with DNM1L; mediates its mitotic kinase cyclin B-CDK1-mediated phosphorylation during mitosis to promote mitochondrial fission. Interacts with the mitotic kinase cyclin B-CDK1 during mitosis. Interacts with the GTP-bound form of RALB (via effector domain). Interacts with REPS1; the interaction is direct and does not affect RALA-binding nor GTPase activator activity of RALBP1. Interacts with REPS2; the interaction is direct and does not affect RALA-binding nor GTPase activator activity of RALBP1. Interacts with EPN1, NUMB and TFAP2A during interphase and mitosis. Interacts with AP2M1; as part of the AP2 complex. Interacts with CDC42. Interacts with RAC1. Tyrosine-phosphorylated upon stimulation of cells with EGF. In terms of processing, may undergo proteolytic cleavage to give peptides which reassemble to form a transporter complex. In terms of tissue distribution, ubiquitous. The highest level of expression was observed in ovaries and skeletal muscle, whereas the lowest was found in spleen, liver and peripheral blood leukocytes.

It is found in the cell membrane. It localises to the cytoplasm. The protein resides in the cytosol. The protein localises to the cytoskeleton. Its subcellular location is the spindle pole. It is found in the nucleus. It localises to the mitochondrion. The enzyme catalyses an S-substituted glutathione(in) + ATP + H2O = an S-substituted glutathione(out) + ADP + phosphate + H(+). The catalysed reaction is ATP + H2O + xenobioticSide 1 = ADP + phosphate + xenobioticSide 2.. It carries out the reaction leukotriene C4(in) + ATP + H2O = leukotriene C4(out) + ADP + phosphate + H(+). In terms of biological role, multifunctional protein that functions as a downstream effector of RALA and RALB. As a GTPase-activating protein/GAP can inactivate CDC42 and RAC1 by stimulating their GTPase activity. As part of the Ral signaling pathway, may also regulate ligand-dependent EGF and insulin receptors-mediated endocytosis. During mitosis, may act as a scaffold protein in the phosphorylation of EPSIN/EPN1 by the mitotic kinase cyclin B-CDK1, preventing endocytosis during that phase of the cell cycle. During mitosis, also controls mitochondrial fission as an effector of RALA. Recruited to mitochondrion by RALA, acts as a scaffold to foster the mitotic kinase cyclin B-CDK1-mediated phosphorylation and activation of DNM1L. Could also function as a primary ATP-dependent active transporter for glutathione conjugates of electrophiles. May also actively catalyze the efflux of a wide range of substrates including xenobiotics like doxorubicin (DOX) contributing to cell multidrug resistance. The chain is RalA-binding protein 1 from Mus musculus (Mouse).